Here is a 225-residue protein sequence, read N- to C-terminus: MHLDHHHESAAAVSADARRPDGSRRALRIGLGGPVGSGKTATVAALCRALRAELSLAVVTNDIYTREDAEFLLREAVLPPERITAVETGACPHTAIRDDISANLEAVEDLEDEVGPLDLVLVESGGDNLTATFSRGLVDAQVFVIDVAGGDDIPRKGGPGVATADLLIVNKTDLAPYVGSDLARMAADAKAARGELPVVLQSLRGEDGVREVADWVRERIAAWTA.

The interval M1–D21 is disordered. A GTP-binding site is contributed by G33–T40.

Belongs to the SIMIBI class G3E GTPase family. UreG subfamily. As to quaternary structure, homodimer. UreD, UreF and UreG form a complex that acts as a GTP-hydrolysis-dependent molecular chaperone, activating the urease apoprotein by helping to assemble the nickel containing metallocenter of UreC. The UreE protein probably delivers the nickel.

The protein resides in the cytoplasm. Functionally, facilitates the functional incorporation of the urease nickel metallocenter. This process requires GTP hydrolysis, probably effectuated by UreG. The chain is Urease accessory protein UreG from Streptomyces coelicolor (strain ATCC BAA-471 / A3(2) / M145).